A 510-amino-acid polypeptide reads, in one-letter code: ATP synthase subunit alpha (510 aa).

169–176 (GDRQTGKT) is a binding site for ATP.

This sequence belongs to the ATPase alpha/beta chains family. As to quaternary structure, F-type ATPases have 2 components, CF(1) - the catalytic core - and CF(0) - the membrane proton channel. CF(1) has five subunits: alpha(3), beta(3), gamma(1), delta(1), epsilon(1). CF(0) has three main subunits: a(1), b(2) and c(9-12). The alpha and beta chains form an alternating ring which encloses part of the gamma chain. CF(1) is attached to CF(0) by a central stalk formed by the gamma and epsilon chains, while a peripheral stalk is formed by the delta and b chains.

The protein localises to the cell membrane. It catalyses the reaction ATP + H2O + 4 H(+)(in) = ADP + phosphate + 5 H(+)(out). Produces ATP from ADP in the presence of a proton gradient across the membrane. The alpha chain is a regulatory subunit. The polypeptide is ATP synthase subunit alpha (Buchnera aphidicola subsp. Schizaphis graminum (strain Sg)).